Consider the following 611-residue polypeptide: Ankyrin repeat protein SKIP35 (611 aa).

ANK repeat units lie at residues 292–322, 323–353, 356–384, 385–414, 416–442, and 445–478; these read LFSN…EGGA, DNVN…RNSL, DVDL…NAIA, FLGP…DMEL, LALT…PPVL, and LSIE…DSTA.

In terms of assembly, interacts with SKP1A/ASK1.

The chain is Ankyrin repeat protein SKIP35 (SKIP35) from Arabidopsis thaliana (Mouse-ear cress).